Reading from the N-terminus, the 346-residue chain is MRSQDLHQRLADLGAKPLHCGRIVRAWLQGRALDACTARQRAEDFLPLSVRQGLPRVAEELEGIARLHSEHPASDGSSRLLVELADRQRVESVLLPRGGLCVSTQVGCAVGCVFCMTGRSGLLRQVGSLEMVAQVVLARRRRAVKKVVFMGMGEPAHNLDNVLEAIDLLGTDGGIGHKNLVFSTVGDPRVFERLPGQRVKPALALSLHSTDAELRRRLLPKAPPLSPEELVEAGETYARQVDYPIQYQWTLLEGVNDSLEEMDGILRLLKGRFAVMNLIPYNSMDGDAYRRPRGERIVELVRYLHSRGVLTKVRNSAGQDIDGGCGQLRARAEGAAPQRHIRVRRG.

Residue E91 is the Proton acceptor of the active site. In terms of domain architecture, Radical SAM core spans 94-320; sequence LLPRGGLCVS…TKVRNSAGQD (227 aa). Cysteines 101 and 325 form a disulfide. [4Fe-4S] cluster is bound by residues C108, C112, and C115. Residues 153–154, S183, 206–208, and N282 each bind S-adenosyl-L-methionine; these read GE and SLH. The active-site S-methylcysteine intermediate is C325.

The protein belongs to the radical SAM superfamily. RlmN family. The cofactor is [4Fe-4S] cluster.

Its subcellular location is the cytoplasm. The protein is Probable RNA methyltransferase PSPA7_3453 of Pseudomonas paraeruginosa (strain DSM 24068 / PA7) (Pseudomonas aeruginosa (strain PA7)).